A 90-amino-acid chain; its full sequence is Sec-independent protein translocase protein TatA (90 aa).

A helical transmembrane segment spans residues 1 to 21; the sequence is MGISPWTLLIVLLIVLLVFGT. Basic and acidic residues-rich tracts occupy residues 42–59 and 70–90; these read MKEG…EPSK and SGEG…RHSS. Residues 42-90 form a disordered region; sequence MKEGEEGAKEGEKSEPSKLEQPPEEEKESGEGHTIEGERSEQPRDRHSS.

The protein belongs to the TatA/E family. The Tat system comprises two distinct complexes: a TatABC complex, containing multiple copies of TatA, TatB and TatC subunits, and a separate TatA complex, containing only TatA subunits. Substrates initially bind to the TatABC complex, which probably triggers association of the separate TatA complex to form the active translocon.

Its subcellular location is the cell inner membrane. Its function is as follows. Part of the twin-arginine translocation (Tat) system that transports large folded proteins containing a characteristic twin-arginine motif in their signal peptide across membranes. TatA could form the protein-conducting channel of the Tat system. The sequence is that of Sec-independent protein translocase protein TatA from Alkalilimnicola ehrlichii (strain ATCC BAA-1101 / DSM 17681 / MLHE-1).